Reading from the N-terminus, the 101-residue chain is Protamine-3 (101 aa).

Residues 1–101 (MGSRCAKLST…PSPEPKQTHS (101 aa)) are disordered. Over residues 45–67 (EGEEEEEDEEEEEEEEEEEEEEQ) the composition is skewed to acidic residues. Serine 93 carries the phosphoserine modification.

The protein belongs to the protamine P3 family. Testis.

It localises to the nucleus. It is found in the chromosome. Its function is as follows. Protamines substitute for histones in the chromatin of sperm during the haploid phase of spermatogenesis. They compact sperm DNA into a highly condensed, stable and inactive complex. The protein is Protamine-3 (Prm3) of Mus musculus (Mouse).